A 106-amino-acid polypeptide reads, in one-letter code: UPF0060 membrane protein RHE_CH01408 (106 aa).

4 consecutive transmembrane segments (helical) span residues 4-24 (IIYA…WAWL), 30-50 (AWWL…LTLV), 59-79 (FAAY…LIEG), and 86-106 (DIGG…APRA).

The protein belongs to the UPF0060 family.

Its subcellular location is the cell inner membrane. This is UPF0060 membrane protein RHE_CH01408 from Rhizobium etli (strain ATCC 51251 / DSM 11541 / JCM 21823 / NBRC 15573 / CFN 42).